The following is a 698-amino-acid chain: Elongation factor G (698 aa).

The tr-type G domain maps to 8-284; that stretch reads ANVRNIGIMA…AVVDYLPSPL (277 aa). Residues 17–24, 81–85, and 135–138 each bind GTP; these read AHIDAGKT, DTPGH, and NKLD.

Belongs to the TRAFAC class translation factor GTPase superfamily. Classic translation factor GTPase family. EF-G/EF-2 subfamily.

The protein resides in the cytoplasm. Its function is as follows. Catalyzes the GTP-dependent ribosomal translocation step during translation elongation. During this step, the ribosome changes from the pre-translocational (PRE) to the post-translocational (POST) state as the newly formed A-site-bound peptidyl-tRNA and P-site-bound deacylated tRNA move to the P and E sites, respectively. Catalyzes the coordinated movement of the two tRNA molecules, the mRNA and conformational changes in the ribosome. The chain is Elongation factor G from Salinispora tropica (strain ATCC BAA-916 / DSM 44818 / JCM 13857 / NBRC 105044 / CNB-440).